The primary structure comprises 117 residues: Photosystem II reaction center Psb28 protein (117 aa).

This sequence belongs to the Psb28 family. In terms of assembly, part of the photosystem II complex.

The protein localises to the cellular thylakoid membrane. The polypeptide is Photosystem II reaction center Psb28 protein (Prochlorococcus marinus (strain MIT 9215)).